The sequence spans 125 residues: METLLEIIARREKQLRGKLTVLDQQQQAIITEQQICQTRALAVSTRLKELMGWQGTLSCHLLLDKKQQMAGLFTQAQSFLTQRQQLENQYQQLVSRRSELQKNFNALMKKKEKITMVLSDAYYQS.

The chain is Secretion system apparatus protein SsaO (ssaO) from Salmonella typhimurium (strain LT2 / SGSC1412 / ATCC 700720).